Consider the following 550-residue polypeptide: Hydroxylamine reductase (550 aa).

Positions 3, 6, 18, and 25 each coordinate [2Fe-2S] cluster. The hybrid [4Fe-2O-2S] cluster site is built by His-249, Glu-273, Cys-317, Cys-405, Cys-433, Cys-458, Glu-492, and Lys-494. Position 405 is a cysteine persulfide (Cys-405).

It belongs to the HCP family. [2Fe-2S] cluster is required as a cofactor. Hybrid [4Fe-2O-2S] cluster serves as cofactor.

It is found in the cytoplasm. The enzyme catalyses A + NH4(+) + H2O = hydroxylamine + AH2 + H(+). In terms of biological role, catalyzes the reduction of hydroxylamine to form NH(3) and H(2)O. The sequence is that of Hydroxylamine reductase from Escherichia coli O17:K52:H18 (strain UMN026 / ExPEC).